We begin with the raw amino-acid sequence, 188 residues long: Elongation factor P-like protein (188 aa).

It belongs to the elongation factor P family.

The protein is Elongation factor P-like protein of Stenotrophomonas maltophilia (strain K279a).